We begin with the raw amino-acid sequence, 223 residues long: DNA mismatch repair protein MutH (223 aa).

The protein belongs to the MutH family.

The protein resides in the cytoplasm. Sequence-specific endonuclease that cleaves unmethylated GATC sequences. It is involved in DNA mismatch repair. The sequence is that of DNA mismatch repair protein MutH from Shewanella sp. (strain MR-7).